The following is an 86-amino-acid chain: MVLQNDIDLLNPPAELEKRKHKLKRLVQSPNSFFMDVKCQGCFNITTVFSHSQTVVVCGNCQTILCQPTGGKAKLTEGCSFRRKGD.

A C4-type zinc finger spans residues 39–61 (CQGCFNITTVFSHSQTVVVCGNC).

This sequence belongs to the eukaryotic ribosomal protein eS27 family. Zn(2+) serves as cofactor.

Its function is as follows. May be involved in the elimination of damaged mRNA after UV irradiation. This is Small ribosomal subunit protein eS27y (RPS27B) from Arabidopsis thaliana (Mouse-ear cress).